The chain runs to 447 residues: Tubulin beta chain (447 aa).

The GTP site is built by Q11, E69, S138, G142, T143, G144, N204, and N226. A Mg(2+)-binding site is contributed by E69. The interval 424 to 447 (QYQEASVSDAEEEYDEEAPLEGEE) is disordered. Over residues 432 to 447 (DAEEEYDEEAPLEGEE) the composition is skewed to acidic residues.

It belongs to the tubulin family. As to quaternary structure, dimer of alpha and beta chains. A typical microtubule is a hollow water-filled tube with an outer diameter of 25 nm and an inner diameter of 15 nM. Alpha-beta heterodimers associate head-to-tail to form protofilaments running lengthwise along the microtubule wall with the beta-tubulin subunit facing the microtubule plus end conferring a structural polarity. Microtubules usually have 13 protofilaments but different protofilament numbers can be found in some organisms and specialized cells. Requires Mg(2+) as cofactor.

It localises to the cytoplasm. Its subcellular location is the cytoskeleton. Its function is as follows. Tubulin is the major constituent of microtubules, a cylinder consisting of laterally associated linear protofilaments composed of alpha- and beta-tubulin heterodimers. Microtubules grow by the addition of GTP-tubulin dimers to the microtubule end, where a stabilizing cap forms. Below the cap, tubulin dimers are in GDP-bound state, owing to GTPase activity of alpha-tubulin. The polypeptide is Tubulin beta chain (TUB1) (Zymoseptoria tritici (Speckled leaf blotch fungus)).